The sequence spans 139 residues: 2S seed storage albumin protein (139 aa).

A signal peptide spans 1–15; that stretch reads AALLVALLFVANAAA. IgE-binding regions lie at residues 16–30, 29–34, 64–78, 65–73, 95–103, 99–111, 102–114, 105–117, 112–126, 125–136, and 125–139; these read FRTT…EDID, IDNPRR, GYDE…RQCC, YDEDNQRQH, QVVRRQQQQ, RQQQ…GEEM, QQQG…MEEM, GLRG…MVQS, EEMV…NECG, CGISSQRCEIRR, and CGIS…RSWF. 2 consecutive propeptides follow at residues 16–31 and 58–71; these read FRTT…DIDN and QQSR…DNQR. Intrachain disulfides connect C39/C88, C52/C77, C78/C125, and C90/C132. The interval 104–115 is immunodominant epitope. IgE-binding; binds to IgE in 75% of the 20 walnut-allergic patients tested; the sequence is QGLRGEEMEEMV. The segment at 107–110 is minimally required for IgE-binding by the immunodominant epitope; the sequence is RGEE. Positions 136–139 are excised as a propeptide; the sequence is RSWF.

This sequence belongs to the 2S seed storage albumins family. As to quaternary structure, the mature protein consists of a small chain and a large chain linked by disulfide bonds. In terms of tissue distribution, expressed in seed (at protein level). Expressed in the peel of mature seed.

Functionally, seed storage protein. This Juglans regia (English walnut) protein is 2S seed storage albumin protein.